Consider the following 477-residue polypeptide: tRNA-2-methylthio-N(6)-dimethylallyladenosine synthase (477 aa).

An MTTase N-terminal domain is found at 9–129 (RKLHIKSYGC…LPQLLARAKT (121 aa)). Cys-18, Cys-54, Cys-92, Cys-170, Cys-174, and Cys-177 together coordinate [4Fe-4S] cluster. The region spanning 156–386 (RSRGISAFVT…QLQNLIDSQQ (231 aa)) is the Radical SAM core domain. The region spanning 391-453 (RTALGRTIDV…RYSLFGTLAS (63 aa)) is the TRAM domain. The interval 454 to 477 (KPTSGEPSNHAATGGAQFQTTAGA) is disordered. Positions 464 to 477 (AATGGAQFQTTAGA) are enriched in low complexity.

It belongs to the methylthiotransferase family. MiaB subfamily. As to quaternary structure, monomer. [4Fe-4S] cluster serves as cofactor.

Its subcellular location is the cytoplasm. It catalyses the reaction N(6)-dimethylallyladenosine(37) in tRNA + (sulfur carrier)-SH + AH2 + 2 S-adenosyl-L-methionine = 2-methylsulfanyl-N(6)-dimethylallyladenosine(37) in tRNA + (sulfur carrier)-H + 5'-deoxyadenosine + L-methionine + A + S-adenosyl-L-homocysteine + 2 H(+). Functionally, catalyzes the methylthiolation of N6-(dimethylallyl)adenosine (i(6)A), leading to the formation of 2-methylthio-N6-(dimethylallyl)adenosine (ms(2)i(6)A) at position 37 in tRNAs that read codons beginning with uridine. The polypeptide is tRNA-2-methylthio-N(6)-dimethylallyladenosine synthase (Nitrobacter winogradskyi (strain ATCC 25391 / DSM 10237 / CIP 104748 / NCIMB 11846 / Nb-255)).